The following is a 266-amino-acid chain: E3 ubiquitin-protein ligase RNF170 (266 aa).

At Met1–Asn26 the chain is on the lumenal side. A helical transmembrane segment spans residues Ala27–Cys47. Topologically, residues Arg48–Arg209 are cytoplasmic. The RING-type zinc-finger motif lies at Cys88 to Arg131. The chain crosses the membrane as a helical span at residues Ile210–Glu230. Residue Gly231 is a topological domain, lumenal. A helical transmembrane segment spans residues Val232 to Ile252. The Cytoplasmic portion of the chain corresponds to Ser253–Gly266.

In terms of tissue distribution, highly expressed in the developing brain, and less within intersomitic structures of the trunk.

It is found in the endoplasmic reticulum membrane. It carries out the reaction S-ubiquitinyl-[E2 ubiquitin-conjugating enzyme]-L-cysteine + [acceptor protein]-L-lysine = [E2 ubiquitin-conjugating enzyme]-L-cysteine + N(6)-ubiquitinyl-[acceptor protein]-L-lysine.. The protein operates within protein modification; protein ubiquitination. Its function is as follows. E3 ubiquitin-protein ligase that plays an essential role in stimulus-induced inositol 1,4,5-trisphosphate receptor (ITPR) ubiquitination and degradation via the endoplasmic reticulum-associated degradation (ERAD) pathway. Also involved in ITPR turnover in resting cells. This chain is E3 ubiquitin-protein ligase RNF170 (rnf170), found in Danio rerio (Zebrafish).